Consider the following 314-residue polypeptide: Methionyl-tRNA formyltransferase (314 aa).

108–111 contacts (6S)-5,6,7,8-tetrahydrofolate; sequence SLLP.

The protein belongs to the Fmt family.

The catalysed reaction is L-methionyl-tRNA(fMet) + (6R)-10-formyltetrahydrofolate = N-formyl-L-methionyl-tRNA(fMet) + (6S)-5,6,7,8-tetrahydrofolate + H(+). In terms of biological role, attaches a formyl group to the free amino group of methionyl-tRNA(fMet). The formyl group appears to play a dual role in the initiator identity of N-formylmethionyl-tRNA by promoting its recognition by IF2 and preventing the misappropriation of this tRNA by the elongation apparatus. This Akkermansia muciniphila (strain ATCC BAA-835 / DSM 22959 / JCM 33894 / BCRC 81048 / CCUG 64013 / CIP 107961 / Muc) protein is Methionyl-tRNA formyltransferase.